The chain runs to 177 residues: Disulfide bond formation protein B (177 aa).

Residues 1-14 (MLIFFKNLSMKRST) are Cytoplasmic-facing. Residues 15–31 (WILLFISALVLESTALY) traverse the membrane as a helical segment. Residues 32-49 (FQHGMGLNPCVMCIYERV) lie on the Periplasmic side of the membrane. The cysteines at positions 41 and 44 are disulfide-linked. Residues 50-65 (AILGILFSGLIGCIAP) traverse the membrane as a helical segment. The Cytoplasmic segment spans residues 66–72 (KWLVLRI). The helical transmembrane segment at 73 to 90 (LALLIGLGSAVKGLLLAI) threads the bilayer. Over 91–145 (KHLDYQINVYPWNQCAMVPDFPQTLPLDKWFPNIFMPSGSCSDITWSFLGFSMVQ) the chain is Periplasmic. A disulfide bridge links Cys105 with Cys131. A helical transmembrane segment spans residues 146 to 164 (WIIVIFACYFLFFIILSIS). Residues 165 to 177 (QFKKVRKNRMLFR) lie on the Cytoplasmic side of the membrane.

Belongs to the DsbB family.

It localises to the cell inner membrane. In terms of biological role, required for disulfide bond formation in some periplasmic proteins. Acts by oxidizing the DsbA protein. This chain is Disulfide bond formation protein B, found in Histophilus somni (strain 129Pt) (Haemophilus somnus).